The sequence spans 739 residues: Adhesion G protein-coupled receptor L4 (739 aa).

The first 19 residues, 1 to 19 (MRLLPLLVGFSTLLNCSYT), serve as a signal peptide directing secretion. One can recognise an EGF-like 1 domain in the interval 20–57 (QNCSKTTCLPNAKCEVHNGVEACFCSQGYSGNGVTICE). Over 20-481 (QNCSKTTCLP…DYNILTRITQ (462 aa)) the chain is Extracellular. N-linked (GlcNAc...) asparagine glycosylation occurs at asparagine 21. Intrachain disulfides connect cysteine 22-cysteine 33, cysteine 27-cysteine 42, cysteine 44-cysteine 56, cysteine 62-cysteine 74, cysteine 68-cysteine 83, cysteine 85-cysteine 106, cysteine 112-cysteine 124, cysteine 118-cysteine 133, and cysteine 135-cysteine 156. In terms of domain architecture, EGF-like 2; calcium-binding spans 58 to 107 (DIDECSESSVCGDHAVCENVNGGFSCFCREGYQTATGKSQFTPNDGSYCQ). An EGF-like 3; calcium-binding domain is found at 108–157 (DIDECSESSVCGDHAVCENVNGGFSCFCREGYQTATGKSQFTPNDGSYCQ). Asparagine 176, asparagine 226, asparagine 237, asparagine 298, asparagine 422, asparagine 430, and asparagine 444 each carry an N-linked (GlcNAc...) asparagine glycan. A GAIN-B domain is found at 293 to 468 (SQFDMNSTDL…AILMSSTSSI (176 aa)). Disulfide bonds link cysteine 418-cysteine 450 and cysteine 438-cysteine 452. A GPS region spans residues 418 to 468 (CAFWNYSVDAMNNGSWSTEGCELTHSNDTHTSCRCSHLTHFAILMSSTSSI). Residues 482–502 (LGIIISLICLAICIFTFWFFS) form a helical membrane-spanning segment. The Cytoplasmic portion of the chain corresponds to 503–513 (EIQSTRTTIHK). The helical transmembrane segment at 514–534 (NLCCSLFLAELVFLIGININT) threads the bilayer. Topologically, residues 535–548 (NKLVCSIIAGLLHY) are extracellular. A helical transmembrane segment spans residues 549–569 (FFLAAFAWMCIEGIHLYLIVV). Topologically, residues 570-581 (GVIYNKGFLHKN) are cytoplasmic. Residues 582-602 (FYIFGYLSPAVVVGFSASLGY) traverse the membrane as a helical segment. The Extracellular portion of the chain corresponds to 603 to 622 (RYYGTTKVCWLSTENNFIWS). A helical membrane pass occupies residues 623–643 (FIGPACLIILVNLLAFGVIIY). Residues 644-667 (KVFRHTAGLKPEVSCYENIRSCAR) lie on the Cytoplasmic side of the membrane. Residues 668 to 688 (GALALLFLLGTTWIFGVLHVV) traverse the membrane as a helical segment. Over 689–695 (HASVVTA) the chain is Extracellular. Residues 696 to 716 (YLFTVSNAFQGMFIFLFLCVL) form a helical membrane-spanning segment. The Cytoplasmic portion of the chain corresponds to 717–739 (SRKIQEEYYRLFKNVPCCFGCLR).

Belongs to the G-protein coupled receptor 2 family. Adhesion G-protein coupled receptor (ADGR) subfamily. Heterodimer of 2 chains generated by proteolytic processing; the large extracellular N-terminal fragment and the membrane-bound C-terminal fragment predominantly remain associated and non-covalently linked. In terms of processing, glycosylated. Post-translationally, proteolytically cleaved into 2 subunits, an extracellular alpha subunit and a seven-transmembrane subunit.

The protein resides in the cell membrane. Endothelial orphan receptor that acts as a key regulator of angiogenesis. This Mus musculus (Mouse) protein is Adhesion G protein-coupled receptor L4 (Adgrl4).